Here is a 320-residue protein sequence, read N- to C-terminus: Apolipoprotein E (320 aa).

The signal sequence occupies residues 1–18; the sequence is MKVLWAALLVAFLAGCQG. 8 tandem repeats follow at residues 82–103, 104–125, 126–147, 148–169, 170–191, 192–213, 214–236, and 237–258. Residues 82–258 form an 8 X 22 AA approximate tandem repeats region; that stretch reads ALMDETMKEL…RLDEVKEQVE (177 aa). A Methionine sulfoxide modification is found at M145. S149 is modified (phosphoserine). Residues 160–170 are LDL and other lipoprotein receptors binding; that stretch reads HLRKLRKRLLR. 164 to 167 provides a ligand contact to heparin; the sequence is LRKR. The interval 212 to 293 is lipid-binding and lipoprotein association; the sequence is AATVGSSLAG…SWFEPLVEDM (82 aa). 232 to 239 is a heparin binding site; that stretch reads GERLRARM. The tract at residues 269-320 is homooligomerization; that stretch reads QQMRLQAEAFQARLKSWFEPLVEDMQRQWAGLVEKVQAAVGASAAPVPSDNH. Positions 281–293 are specificity for association with VLDL; the sequence is RLKSWFEPLVEDM.

Belongs to the apolipoprotein A1/A4/E family. As to quaternary structure, homotetramer. May interact with ABCA1; functionally associated with ABCA1 in the biogenesis of HDLs. May interact with APP/A4 amyloid-beta peptide; the interaction is extremely stable in vitro but its physiological significance is unclear. May interact with MAPT. May interact with MAP2. In the cerebrospinal fluid, interacts with secreted SORL1. Interacts with PMEL; this allows the loading of PMEL luminal fragment on ILVs to induce fibril nucleation. APOE exists as multiple glycosylated and sialylated glycoforms within cells and in plasma. The extent of glycosylation and sialylation are tissue and context specific. In terms of processing, glycated in plasma VLDL. Post-translationally, phosphorylated by FAM20C in the extracellular medium.

The protein localises to the secreted. The protein resides in the extracellular space. It localises to the extracellular matrix. Its subcellular location is the extracellular vesicle. It is found in the endosome. The protein localises to the multivesicular body. Functionally, APOE is an apolipoprotein, a protein associating with lipid particles, that mainly functions in lipoprotein-mediated lipid transport between organs via the plasma and interstitial fluids. APOE is a core component of plasma lipoproteins and is involved in their production, conversion and clearance. Apolipoproteins are amphipathic molecules that interact both with lipids of the lipoprotein particle core and the aqueous environment of the plasma. As such, APOE associates with chylomicrons, chylomicron remnants, very low density lipoproteins (VLDL) and intermediate density lipoproteins (IDL) but shows a preferential binding to high-density lipoproteins (HDL). It also binds a wide range of cellular receptors including the LDL receptor/LDLR, the LDL receptor-related proteins LRP1, LRP2 and LRP8 and the very low-density lipoprotein receptor/VLDLR that mediate the cellular uptake of the APOE-containing lipoprotein particles. Finally, APOE also has a heparin-binding activity and binds heparan-sulfate proteoglycans on the surface of cells, a property that supports the capture and the receptor-mediated uptake of APOE-containing lipoproteins by cells. A main function of APOE is to mediate lipoprotein clearance through the uptake of chylomicrons, VLDLs, and HDLs by hepatocytes. APOE is also involved in the biosynthesis by the liver of VLDLs as well as their uptake by peripheral tissues ensuring the delivery of triglycerides and energy storage in muscle, heart and adipose tissues. By participating in the lipoprotein-mediated distribution of lipids among tissues, APOE plays a critical role in plasma and tissues lipid homeostasis. APOE is also involved in two steps of reverse cholesterol transport, the HDLs-mediated transport of cholesterol from peripheral tissues to the liver, and thereby plays an important role in cholesterol homeostasis. First, it is functionally associated with ABCA1 in the biogenesis of HDLs in tissues. Second, it is enriched in circulating HDLs and mediates their uptake by hepatocytes. APOE also plays an important role in lipid transport in the central nervous system, regulating neuron survival and sprouting. The sequence is that of Apolipoprotein E (APOE) from Plecturocebus moloch (Dusky titi monkey).